The primary structure comprises 138 residues: Cofilin (138 aa).

In terms of domain architecture, ADF-H spans 2-136 (SSGVQPTQEC…TKDALFEKAT (135 aa)).

This sequence belongs to the actin-binding proteins ADF family.

The protein resides in the cytoplasm. It localises to the cytoskeleton. The protein localises to the nucleus matrix. Functionally, controls reversibly actin polymerization and depolymerization in a pH-sensitive manner. It has the ability to bind G- and F-actin in a 1:1 ratio of cofilin to actin. Binding to F-actin is regulated by tropomyosin. It is the major component of intranuclear and cytoplasmic actin rods. Required for accumulation of actin at the cell division site via depolymerizing actin at the cell ends. In association with myosin II has a role in the assembly of the contractile ring via severing actin filaments. Involved in the maintenance of the contractile ring once formed. In association with profilin and capping protein, has a role in the mitotic reorganization of the actin cytoskeleton. This chain is Cofilin (COF1), found in Cryptococcus neoformans var. neoformans serotype D (strain B-3501A) (Filobasidiella neoformans).